Reading from the N-terminus, the 191-residue chain is MEKFGLKALVPLLKLEDKELSSTYDHSMTLGADLSSMLYSLGIPRDSQDHRVLDTFQSPWAETSRSEVEPRFFTPESFTNIPGVLQSTVTPPCFNSIQNDQQRVALFQDETLFFLFYKHPGTVIQELTYLELRKRNWRYHKTLKAWLTKDPMMEPIVSADGLSERGSYVFFDPQRWEKCQRDFLLFYNAIM.

Belongs to the CNOT2/3/5 family. Forms a NOT protein complex that comprises NOT1, NOT2, NOT3, NOT4 and NOT5. Subunit of the 1.0 MDa CCR4-NOT core complex that contains CCR4, CAF1, NOT1, NOT2, NOT3, NOT4, NOT5, CAF40 and CAF130. In the complex interacts with NOT1 and NOT5. The core complex probably is part of a less characterized 1.9 MDa CCR4-NOT complex.

The protein resides in the cytoplasm. It localises to the nucleus. Functionally, acts as a component of the CCR4-NOT core complex, which in the nucleus seems to be a general transcription factor, and in the cytoplasm the major mRNA deadenylase involved in mRNA turnover. NOT2 is required for the integrity of the complex. The NOT protein subcomplex negatively regulates the basal and activated transcription of many genes. Preferentially affects TC-type TATA element-dependent transcription. Could directly or indirectly inhibit component(s) of the general transcription machinery. This Saccharomyces cerevisiae (strain ATCC 204508 / S288c) (Baker's yeast) protein is General negative regulator of transcription subunit 2 (CDC36).